Reading from the N-terminus, the 277-residue chain is Myelin proteolipid protein (277 aa).

The Cytoplasmic segment spans residues 1-10 (MGLLECCARC). 3 S-palmitoyl cysteine lipidation sites follow: Cys-6, Cys-7, and Cys-10. A helical transmembrane segment spans residues 11 to 36 (LVGAPFASLVATGLCFFGVALFCGCG). Topologically, residues 37 to 59 (HEALTGTEKLIETYFSKNYQDYE) are extracellular. A helical transmembrane segment spans residues 60 to 88 (YLINVIHAFQYVIYGTASFFFLYGALLLA). Topologically, residues 89 to 151 (EGFYTTGAVR…LGKWLGHPDK (63 aa)) are cytoplasmic. Cys-109 carries S-palmitoyl cysteine lipidation. Ser-114 carries the post-translational modification Phosphoserine. Thr-116 and Thr-118 each carry phosphothreonine. Cys-141 is lipidated: S-palmitoyl cysteine. Residues 152–178 (FVGITYALTVVWLLVFACSAVPVYIYF) form a helical membrane-spanning segment. Over 179–238 (NTWTTCQSIAFPSKTSASIGSLCADARMYGVLPWNAFPGKVCGSNLLSICKTAEFQMTFH) the chain is Extracellular. 2 disulfide bridges follow: Cys-184/Cys-228 and Cys-201/Cys-220. A lipid anchor (O-palmitoyl serine) is attached at Ser-199. A helical membrane pass occupies residues 239-268 (LFIAAFVGAAATLISLLTFMIAATYNFAVL). The Cytoplasmic portion of the chain corresponds to 269 to 277 (KLMGRGTKF).

The protein belongs to the myelin proteolipid protein family.

It is found in the cell membrane. It localises to the myelin membrane. Functionally, this is the major myelin protein from the central nervous system. It plays an important role in the formation or maintenance of the multilamellar structure of myelin. The sequence is that of Myelin proteolipid protein (PLP1) from Macaca fascicularis (Crab-eating macaque).